Reading from the N-terminus, the 412-residue chain is Argininosuccinate synthase (412 aa).

Residues 16–24 (AYSGGLDTS) and Ala44 each bind ATP. Residues Tyr96 and Ser101 each coordinate L-citrulline. Gly126 contacts ATP. Residues Thr128, Asn132, and Asp133 each coordinate L-aspartate. An L-citrulline-binding site is contributed by Asn132. L-citrulline-binding residues include Arg136, Ser185, Ser194, Glu270, and Tyr282.

This sequence belongs to the argininosuccinate synthase family. Type 1 subfamily. Homotetramer.

The protein localises to the cytoplasm. The enzyme catalyses L-citrulline + L-aspartate + ATP = 2-(N(omega)-L-arginino)succinate + AMP + diphosphate + H(+). It participates in amino-acid biosynthesis; L-arginine biosynthesis; L-arginine from L-ornithine and carbamoyl phosphate: step 2/3. The polypeptide is Argininosuccinate synthase (Shewanella baltica (strain OS185)).